Consider the following 72-residue polypeptide: uncharacterized protein (72 aa).

This is an uncharacterized protein from Vaccinia virus (strain Copenhagen) (VACV).